The following is a 403-amino-acid chain: Ribose-phosphate pyrophosphokinase 1, chloroplastic (403 aa).

Residues 1-49 constitute a chloroplast transit peptide; it reads MASLGLSFPPAAKTPTYLASSSSTFFSNSSLSVRTSQFRSRNSVFACVK. Aspartate 217, histidine 219, aspartate 228, and aspartate 232 together coordinate Mg(2+). The segment at 303 to 318 is binding of phosphoribosylpyrophosphate; it reads GKVAIMVDDMIDTAGT.

It belongs to the ribose-phosphate pyrophosphokinase family. Mg(2+) is required as a cofactor.

It localises to the plastid. The protein resides in the chloroplast. It carries out the reaction D-ribose 5-phosphate + ATP = 5-phospho-alpha-D-ribose 1-diphosphate + AMP + H(+). In Arabidopsis thaliana (Mouse-ear cress), this protein is Ribose-phosphate pyrophosphokinase 1, chloroplastic (PRS1).